The following is a 394-amino-acid chain: Elongation factor Tu (394 aa).

Positions 10 to 204 (KEHANIGTIG…AVDDYIPTPE (195 aa)) constitute a tr-type G domain. Residues 19–26 (GHVDHGKT) are G1. Residue 19–26 (GHVDHGKT) coordinates GTP. T26 contacts Mg(2+). The segment at 60 to 64 (GITIN) is G2. Residues 81 to 84 (DCPG) form a G3 region. GTP-binding positions include 81-85 (DCPGH) and 136-139 (NKVD). The interval 136–139 (NKVD) is G4. Residues 174–176 (SAL) form a G5 region.

Belongs to the TRAFAC class translation factor GTPase superfamily. Classic translation factor GTPase family. EF-Tu/EF-1A subfamily. Monomer.

The protein localises to the cytoplasm. It carries out the reaction GTP + H2O = GDP + phosphate + H(+). Functionally, GTP hydrolase that promotes the GTP-dependent binding of aminoacyl-tRNA to the A-site of ribosomes during protein biosynthesis. The sequence is that of Elongation factor Tu from Staphylococcus haemolyticus (strain JCSC1435).